The sequence spans 262 residues: Adenosylcobinamide-GDP ribazoletransferase (262 aa).

The next 5 membrane-spanning stretches (helical) occupy residues 41–63 (AFPFAGLAIALPSAAVAMALMAL), 68–85 (LFAAFVVVAIQALVTGAL), 115–134 (IGTYAAVALILSFGLRVSAF), 141–163 (FSPLGAAMAILGAACLSRAAMVW), and 201–221 (LLFYLAQVPALGVIAALVAFL).

This sequence belongs to the CobS family. Associated with a large complex of proteins. Mg(2+) serves as cofactor.

Its subcellular location is the cell inner membrane. The enzyme catalyses alpha-ribazole + adenosylcob(III)inamide-GDP = adenosylcob(III)alamin + GMP + H(+). The catalysed reaction is alpha-ribazole 5'-phosphate + adenosylcob(III)inamide-GDP = adenosylcob(III)alamin 5'-phosphate + GMP + H(+). The protein operates within cofactor biosynthesis; adenosylcobalamin biosynthesis; adenosylcobalamin from cob(II)yrinate a,c-diamide: step 7/7. Functionally, joins adenosylcobinamide-GDP and alpha-ribazole to generate adenosylcobalamin (Ado-cobalamin). Also synthesizes adenosylcobalamin 5'-phosphate from adenosylcobinamide-GDP and alpha-ribazole 5'-phosphate. This chain is Adenosylcobinamide-GDP ribazoletransferase (cobV), found in Sinorhizobium sp.